The following is a 79-amino-acid chain: RNA-binding protein KhpA (79 aa).

The KH domain occupies 32–79 (TVVIELRVDPAELGKVIGKQGRIARALRTILTAIGRKIGKRVVLEILE).

The protein belongs to the KhpA RNA-binding protein family.

The protein localises to the cytoplasm. A probable RNA-binding protein. This chain is RNA-binding protein KhpA, found in Aquifex aeolicus (strain VF5).